A 768-amino-acid polypeptide reads, in one-letter code: Phosphoribosylformylglycinamidine synthase subunit PurL (768 aa).

The active site involves His53. Tyr56 serves as a coordination point for ATP. Residue Glu98 participates in Mg(2+) binding. Substrate-binding positions include 99–102 (SHNH) and Arg121. The active-site Proton acceptor is His100. Asp122 is a binding site for Mg(2+). Gln253 contacts substrate. Asp285 contributes to the Mg(2+) binding site. Substrate is bound at residue 328 to 330 (ETQ). 2 residues coordinate ATP: Asp516 and Gly561. Asn562 contacts Mg(2+). Ser564 contributes to the substrate binding site.

This sequence belongs to the FGAMS family. In terms of assembly, monomer. Part of the FGAM synthase complex composed of 1 PurL, 1 PurQ and 2 PurS subunits.

Its subcellular location is the cytoplasm. It catalyses the reaction N(2)-formyl-N(1)-(5-phospho-beta-D-ribosyl)glycinamide + L-glutamine + ATP + H2O = 2-formamido-N(1)-(5-O-phospho-beta-D-ribosyl)acetamidine + L-glutamate + ADP + phosphate + H(+). It functions in the pathway purine metabolism; IMP biosynthesis via de novo pathway; 5-amino-1-(5-phospho-D-ribosyl)imidazole from N(2)-formyl-N(1)-(5-phospho-D-ribosyl)glycinamide: step 1/2. In terms of biological role, part of the phosphoribosylformylglycinamidine synthase complex involved in the purines biosynthetic pathway. Catalyzes the ATP-dependent conversion of formylglycinamide ribonucleotide (FGAR) and glutamine to yield formylglycinamidine ribonucleotide (FGAM) and glutamate. The FGAM synthase complex is composed of three subunits. PurQ produces an ammonia molecule by converting glutamine to glutamate. PurL transfers the ammonia molecule to FGAR to form FGAM in an ATP-dependent manner. PurS interacts with PurQ and PurL and is thought to assist in the transfer of the ammonia molecule from PurQ to PurL. This is Phosphoribosylformylglycinamidine synthase subunit PurL from Methanothrix thermoacetophila (strain DSM 6194 / JCM 14653 / NBRC 101360 / PT) (Methanosaeta thermophila).